Consider the following 459-residue polypeptide: Methylenetetrahydrofolate--tRNA-(uracil-5-)-methyltransferase TrmFO (459 aa).

Residue Gly-26–Gly-31 participates in FAD binding.

Belongs to the MnmG family. TrmFO subfamily. The cofactor is FAD.

It is found in the cytoplasm. The catalysed reaction is uridine(54) in tRNA + (6R)-5,10-methylene-5,6,7,8-tetrahydrofolate + NADH + H(+) = 5-methyluridine(54) in tRNA + (6S)-5,6,7,8-tetrahydrofolate + NAD(+). It carries out the reaction uridine(54) in tRNA + (6R)-5,10-methylene-5,6,7,8-tetrahydrofolate + NADPH + H(+) = 5-methyluridine(54) in tRNA + (6S)-5,6,7,8-tetrahydrofolate + NADP(+). Functionally, catalyzes the folate-dependent formation of 5-methyl-uridine at position 54 (M-5-U54) in all tRNAs. The polypeptide is Methylenetetrahydrofolate--tRNA-(uracil-5-)-methyltransferase TrmFO (Synechococcus sp. (strain JA-2-3B'a(2-13)) (Cyanobacteria bacterium Yellowstone B-Prime)).